We begin with the raw amino-acid sequence, 378 residues long: Actin-related protein 2/3 complex subunit 1A (378 aa).

WD repeat units follow at residues 8 to 47 (RFAESITCHAWSPDLSMVALCPNNTEVHIYKSLSQDHWER), 53 to 92 (KHDQIVSGIDWSSKSNKIVTVSHDRNSYVWSLEGAEWVPT), 97 to 138 (RLNR…WVSK), 143 to 182 (RHESSVTSVAWHPNNVLLATTSTDGKCRVFSTFIKGVDTK), 203 to 242 (LSYSWAFGVKWSPSGNTLAYVGHSSMIYFVDDVGPSPLAQ), 257 to 295 (ISEKMVIGVGYDSNPMVFASDDTGIWSFIRYIGEKKAAS), and 331 to 375 (VHDN…QELG).

The protein belongs to the WD repeat ARPC1 family. As to quaternary structure, component of the Arp2/3 complex composed of ARP2, ARP3, ARPC1/p41-ARC, ARPC2/p34-ARC, ARPC3/p21-ARC, ARPC4/p20-ARC and ARPC5/p16-ARC. Expressed at low levels in all tissues with a relatively highest expression in inflorescences.

Its subcellular location is the cytoplasm. The protein localises to the cytoskeleton. In terms of biological role, functions as a component of the Arp2/3 complex which is involved in regulation of actin polymerization and together with an activating nucleation-promoting factor (NPF) mediates the formation of branched actin networks. Arp2/3 complex plays a critical role in the control of cell morphogenesis via the modulation of cell polarity development. The protein is Actin-related protein 2/3 complex subunit 1A (ARPC1A) of Arabidopsis thaliana (Mouse-ear cress).